The sequence spans 164 residues: Protein CURVATURE THYLAKOID 1A, chloroplastic (164 aa).

The N-terminal 62 residues, 1–62 (MAISVAASSS…LQKVELLKTR (62 aa)), are a transit peptide targeting the chloroplast. Ala-63 is subject to N-acetylalanine. Over 63–93 (ASSEETSSIDTNELITDLKEKWDGLENKSTV) the chain is Stromal. Residues 94–114 (LIYGGGAIVAVWLSSIVVGAI) traverse the membrane as a helical segment. The Lumenal portion of the chain corresponds to 115 to 116 (NS). Residues 117-137 (VPLLPKVMELVGLGYTGWFVY) traverse the membrane as a helical segment. The Stromal portion of the chain corresponds to 138–164 (RYLLFKSSRKELAEDIESLKKKIAGSE). A coiled-coil region spans residues 140 to 164 (LLFKSSRKELAEDIESLKKKIAGSE).

This sequence belongs to the CURT family. As to quaternary structure, homo- and heterodimers and trimers.

The protein resides in the plastid. It is found in the chloroplast. Its subcellular location is the plastoglobule. The protein localises to the membrane. It localises to the chloroplast thylakoid membrane. Its function is as follows. Determines thylakoid architecture by inducing membrane curvature. This chain is Protein CURVATURE THYLAKOID 1A, chloroplastic (CURT1A), found in Arabidopsis thaliana (Mouse-ear cress).